Consider the following 172-residue polypeptide: Acidic proline-rich protein PRP25 (172 aa).

The signal sequence occupies residues 1–16 (MLVVLFTAVLLTLSYA). The tract at residues 22-172 (ELQILDQTPN…QQGPPPPGGP (151 aa)) is disordered. Residues 32 to 44 (QKPPPPGFPPRPP) are compositionally biased toward pro residues. The segment covering 57 to 67 (GPQQSPLQPGK) has biased composition (low complexity). 2 stretches are compositionally biased toward pro residues: residues 68 to 137 (PQDP…PQQK) and 145 to 172 (QGPPPPGGPQQKPPQPGNQQGPPPPGGP).

Its subcellular location is the secreted. The protein is Acidic proline-rich protein PRP25 of Rattus norvegicus (Rat).